Here is a 217-residue protein sequence, read N- to C-terminus: Eukaryotic translation initiation factor 4E (217 aa).

The segment at 1–27 (MATVEPETTPTPNPPPAEEEKTESNQE) is disordered. Position 2 is an N-acetylalanine (A2). T22 carries the post-translational modification Phosphothreonine. An EIF4EBP1/2/3 binding region spans residues 37 to 40 (HPLQ). MRNA is bound at residue 56 to 57 (WQ). The EIF4EBP1/2/3 binding stretch occupies residues 73–77 (WALYN). MRNA is bound at residue 102 to 103 (WE). The segment at 132–139 (ETLLCLIG) is EIF4EBP1/2/3 binding. MRNA is bound by residues 157–162 (RAKGDK) and 205–207 (TKS). Phosphoserine; by PKC and MKNK2 is present on S209.

It belongs to the eukaryotic initiation factor 4E family. EIF4F is a multi-subunit complex, the composition of which varies with external and internal environmental conditions. It is composed of at least EIF4A, EIF4E and EIF4G1/EIF4G3. EIF4E is also known to interact with other partners. Interacts with EIF4ENIF1/4E-T; promotes recruitment to P-bodies and import into the nucleus. Hypophosphorylated EIF4EBP1, EIF4EBP2 and EIF4EBP3 compete with EIF4G1/EIF4G3 to interact with EIF4E; insulin stimulated MAP-kinase (MAPK1 and MAPK3) phosphorylation of EIF4EBP1 causes dissociation of the complex allowing EIF4G1/EIF4G3 to bind and consequent initiation of translation. Interacts mutually exclusive with EIF4A1 or EIF4A2. Interacts with NGDN and PIWIL2. Component of the CYFIP1-EIF4E-FMR1 complex composed of CYFIP, EIF4E and FMR1. Interacts directly with CYFIP1. Interacts with CLOCK. Binds to MKNK2 in nucleus. Interacts with LIMD1, WTIP and AJUBA. Interacts with APOBEC3G in an RNA-dependent manner. Interacts with LARP1. Interacts with METTL3. Interacts with RBM24; this interaction prevents EIF4E from binding to p53/TP53 mRNA and inhibits the assembly of translation initiation complex. Interacts with DDX3X; interaction is direct and in an RNA-independent manner; this interaction enhances EIF4E cap-binding ability and is required for the repression of cap-dependent translation and the increase of IRES-mediated translation. DDX3X competes with EIF4G1 for interaction with EIF4E. Interacts with EIF4G1; which in a mutual exclusive interaction associates either with EIF1 or with EIF4E on a common binding site. Interacts with BTG4 and CNOT7. Interacts with LRPPRC (via N-terminus); the interaction promotes association of EIF4E with 4ESE-containing mRNAs. Interacts with mRNA cleavage enzyme CPSF3 and its cofactor CPSF1. Interacts (via RING-type zinc finger) with PML; the interaction results in conformational changes of both interacting proteins and reduces EIF4E affinity for the 5' m7G cap of mRNA, thus reducing EIF4E-mediated mRNA nuclear export. Interacts with homeobox protein HHEX/PRH; the interaction inhibits EIF4E-mediated mRNA nuclear export. Interacts with homeobox protein HOXA9; the interaction positively regulates EIF4E-mediated mRNA nuclear export. Interacts with homeobox protein EMX2. In terms of processing, phosphorylation increases the ability of the protein to bind to mRNA caps and to form the eIF4F complex. Phosphorylation also enhances its mRNA transport function. Phosphorylation at Ser-209 is not essential for protein synthesis.

The protein resides in the cytoplasm. It localises to the P-body. Its subcellular location is the stress granule. The protein localises to the nucleus. It is found in the nucleus speckle. The protein resides in the nuclear body. In terms of biological role, acts in the cytoplasm to initiate and regulate protein synthesis and is required in the nucleus for export of a subset of mRNAs from the nucleus to the cytoplasm which promotes processes such as RNA capping, processing and splicing. Component of the protein complex eIF4F, which is involved in the recognition of the mRNA cap, ATP-dependent unwinding of 5'-terminal secondary structure and recruitment of mRNA to the ribosome. This protein recognizes and binds the 7-methylguanosine (m7G)-containing mRNA cap during an early step in the initiation of protein synthesis and facilitates ribosome binding by inducing the unwinding of the mRNAs secondary structures. Together with EIF4G1, antagonizes the scanning promoted by EIF1-EIF4G1 and is required for TISU translation, a process where the TISU element recognition makes scanning unnecessary. In addition to its role in translation initiation, also acts as a regulator of translation and stability in the cytoplasm. Component of the CYFIP1-EIF4E-FMR1 complex which binds to the mRNA cap and mediates translational repression: in the complex, EIF4E mediates the binding to the mRNA cap. Component of a multiprotein complex that sequesters and represses translation of proneurogenic factors during neurogenesis. In P-bodies, component of a complex that mediates the storage of translationally inactive mRNAs in the cytoplasm and prevents their degradation. May play an important role in spermatogenesis through translational regulation of stage-specific mRNAs during germ cell development. As well as its roles in translation, also involved in mRNA nucleocytoplasmic transport. Its role in mRNA export from the nucleus to the cytoplasm relies on its ability to bind the m7G cap of RNAs and on the presence of the 50-nucleotide EIF4E sensitivity element (4ESE) in the 3'UTR of sensitive transcripts. Interaction with the 4ESE is mediated by LRPPRC which binds simultaneously to both EIF4E and the 4ESE, thereby acting as a platform for assembly for the RNA export complex. EIF4E-dependent mRNA export is independent of ongoing protein or RNA synthesis and is also NFX1-independent but is XPO1-dependent with LRPPRC interacting with XPO1 to form an EIF4E-dependent mRNA export complex. Alters the composition of the cytoplasmic face of the nuclear pore to promote RNA export by reducing RANBP2 expression, relocalizing nucleoporin NUP214 and increasing expression of RANBP1 and RNA export factors DDX19 and GLE1. Promotes the nuclear export of cyclin CCND1 mRNA. Promotes the nuclear export of NOS2/iNOS mRNA. Promotes the nuclear export of MDM2 mRNA. Also promotes the export of additional mRNAs, including others involved in the cell cycle. In the nucleus, binds to capped splice factor-encoding mRNAs and stimulates their nuclear export to enhance splice factor production by increasing their cytoplasmic availability to the translation machinery. May also regulate splicing through interaction with the spliceosome in an RNA and m7G cap-dependent manner. Also binds to some pre-mRNAs and may play a role in their recruitment to the spliceosome. Promotes steady-state capping of a subset of coding and non-coding RNAs by mediating nuclear export of capping machinery mRNAs including RNMT, RNGTT and RAMAC to enhance their translation. Stimulates mRNA 3'-end processing by promoting the expression of several core cleavage complex factors required for mRNA cleavage and polyadenylation, and may also have a direct effect through its interaction with the CPSF3 cleavage enzyme. Rescues cells from apoptosis by promoting activation of serine/threonine-protein kinase AKT1 through mRNA export of NBS1 which potentiates AKT1 phosphorylation and also through mRNA export of AKT1 effectors, allowing for increased production of these proteins. In Oryctolagus cuniculus (Rabbit), this protein is Eukaryotic translation initiation factor 4E (EIF4E).